The primary structure comprises 363 residues: MLTFPLINDTSRKIIHIDMDAFFASVEVRDNPSLKVKPVVIARNPLQTGGRGVVSTCSYEARAFGIHSASAKEAYDLCPQAIFISGNYEKYTKVSKQVREIFKRYTDDIEAASIDEAYLDVTENKIGAQSAIKIAKLIQHDIFVELGLTCSAGVSYNKFLAKIASDYEKPHGLTLIMPEEALEFLAKLPVEKFHGVGKATVPKLHALGFFNGGDLQKADPVDLAERFGVYGWELYQKANGIHNSKVKNYRERKSVGKERTYGKLLYLPDDIKAELSKISGKVSDSLKSHQLKGSIVILKLRYSDFTTLTKRKSLAEKLESPEEIAEVAQEIFEELEYDESLGVRLLGVTVTEFGAQKATLDMQ.

Residues 14–197 enclose the UmuC domain; sequence IIHIDMDAFF…LPVEKFHGVG (184 aa). Mg(2+)-binding residues include Asp18 and Asp115. Glu116 is a catalytic residue.

It belongs to the DNA polymerase type-Y family. In terms of assembly, monomer. Mg(2+) serves as cofactor.

The protein localises to the cytoplasm. The catalysed reaction is DNA(n) + a 2'-deoxyribonucleoside 5'-triphosphate = DNA(n+1) + diphosphate. Functionally, poorly processive, error-prone DNA polymerase involved in untargeted mutagenesis. Copies undamaged DNA at stalled replication forks, which arise in vivo from mismatched or misaligned primer ends. These misaligned primers can be extended by PolIV. Exhibits no 3'-5' exonuclease (proofreading) activity. May be involved in translesional synthesis, in conjunction with the beta clamp from PolIII. The chain is DNA polymerase IV from Lactococcus lactis subsp. lactis (strain IL1403) (Streptococcus lactis).